The chain runs to 20 residues: Styelin-A (20 aa).

Hemocytes and pharyngeal tissues.

Its subcellular location is the secreted. Its function is as follows. Bactericidal against several Gram-positive and Gram-negative bacteria. This is Styelin-A from Styela clava (Sea squirt).